We begin with the raw amino-acid sequence, 518 residues long: Arginyl-tRNA--protein transferase 1 (518 aa).

Residue serine 169 is modified to Phosphoserine. The tract at residues 175–203 (EKLGSGEPSHSVKVHTVPKPGKGADLSKP) is disordered.

The protein belongs to the R-transferase family. In terms of assembly, monomer. Interacts with LIAT1; LIAT1 is not a substrate of ATE1, the interaction takes place in the cytoplasm and seems to increase ATE1 arginyltransferase activity.

It is found in the nucleus. It localises to the cytoplasm. The enzyme catalyses an N-terminal L-alpha-aminoacyl-[protein] + L-arginyl-tRNA(Arg) = an N-terminal L-arginyl-L-aminoacyl-[protein] + tRNA(Arg) + H(+). Functionally, involved in the post-translational conjugation of arginine to the N-terminal aspartate or glutamate of a protein. This arginylation is required for degradation of the protein via the ubiquitin pathway. Does not arginylate cysteine residues. This is Arginyl-tRNA--protein transferase 1 from Homo sapiens (Human).